Consider the following 134-residue polypeptide: ATP synthase epsilon chain (134 aa).

It belongs to the ATPase epsilon chain family. In terms of assembly, F-type ATPases have 2 components, CF(1) - the catalytic core - and CF(0) - the membrane proton channel. CF(1) has five subunits: alpha(3), beta(3), gamma(1), delta(1), epsilon(1). CF(0) has three main subunits: a, b and c.

The protein localises to the cell inner membrane. In terms of biological role, produces ATP from ADP in the presence of a proton gradient across the membrane. The chain is ATP synthase epsilon chain from Sinorhizobium fredii (strain NBRC 101917 / NGR234).